The following is a 445-amino-acid chain: Phosphoglucosamine mutase (445 aa).

Serine 102 (phosphoserine intermediate) is an active-site residue. Residues serine 102, aspartate 241, aspartate 243, and aspartate 245 each coordinate Mg(2+). A Phosphoserine modification is found at serine 102.

The protein belongs to the phosphohexose mutase family. It depends on Mg(2+) as a cofactor. Activated by phosphorylation.

It catalyses the reaction alpha-D-glucosamine 1-phosphate = D-glucosamine 6-phosphate. Functionally, catalyzes the conversion of glucosamine-6-phosphate to glucosamine-1-phosphate. The polypeptide is Phosphoglucosamine mutase (Shewanella sp. (strain W3-18-1)).